Consider the following 404-residue polypeptide: Propionate kinase PduW (404 aa).

Belongs to the acetokinase family. PduW subfamily.

The protein resides in the cytoplasm. It catalyses the reaction propanoate + ATP = propanoyl phosphate + ADP. It participates in polyol metabolism; 1,2-propanediol degradation. It functions in the pathway organic acid metabolism; propanoate degradation. Functionally, works with phosphate acetyltransferase (pta) to capture exogenous propionate and regenerate propionyl-CoA during degradation of propionate and 1,2-propanediol (1,2-PD). Ectopic expression partially complements a cobB deletion allowing some growth on propionate. Restores growth to an eutQ deletion on ethanolamine and tetrathionate under anoxic conditions. This is Propionate kinase PduW from Salmonella typhimurium (strain LT2 / SGSC1412 / ATCC 700720).